Here is a 305-residue protein sequence, read N- to C-terminus: Methionyl-tRNA formyltransferase (305 aa).

108-111 (SLLP) contacts (6S)-5,6,7,8-tetrahydrofolate.

It belongs to the Fmt family.

The enzyme catalyses L-methionyl-tRNA(fMet) + (6R)-10-formyltetrahydrofolate = N-formyl-L-methionyl-tRNA(fMet) + (6S)-5,6,7,8-tetrahydrofolate + H(+). Its function is as follows. Attaches a formyl group to the free amino group of methionyl-tRNA(fMet). The formyl group appears to play a dual role in the initiator identity of N-formylmethionyl-tRNA by promoting its recognition by IF2 and preventing the misappropriation of this tRNA by the elongation apparatus. This chain is Methionyl-tRNA formyltransferase, found in Clavibacter sepedonicus (Clavibacter michiganensis subsp. sepedonicus).